The following is a 277-amino-acid chain: S-formylglutathione hydrolase FrmB (277 aa).

Catalysis depends on charge relay system residues Ser-145, Asp-221, and His-254.

It belongs to the esterase D family.

It catalyses the reaction S-formylglutathione + H2O = formate + glutathione + H(+). Serine hydrolase involved in the detoxification of formaldehyde. Hydrolyzes S-formylglutathione to glutathione and formate. This is S-formylglutathione hydrolase FrmB (frmB) from Escherichia coli (strain ATCC 8739 / DSM 1576 / NBRC 3972 / NCIMB 8545 / WDCM 00012 / Crooks).